An 874-amino-acid chain; its full sequence is Bifunctional uridylyltransferase/uridylyl-removing enzyme (874 aa).

The uridylyltransferase stretch occupies residues 1-332 (MPLQSPLTFS…NGGATENAEI (332 aa)). The segment at 333-692 (LDADFQRRGS…ISKKATRGGT (360 aa)) is uridylyl-removing. The HD domain maps to 451–573 (VDEHSIRLLK…VRDEESLEYL (123 aa)). ACT domains are found at residues 693–777 (EVFV…RTPN) and 800–874 (LMEF…AVTA).

It belongs to the GlnD family. It depends on Mg(2+) as a cofactor.

The enzyme catalyses [protein-PII]-L-tyrosine + UTP = [protein-PII]-uridylyl-L-tyrosine + diphosphate. It carries out the reaction [protein-PII]-uridylyl-L-tyrosine + H2O = [protein-PII]-L-tyrosine + UMP + H(+). Uridylyltransferase (UTase) activity is inhibited by glutamine, while glutamine activates uridylyl-removing (UR) activity. Modifies, by uridylylation and deuridylylation, the PII regulatory proteins (GlnB and homologs), in response to the nitrogen status of the cell that GlnD senses through the glutamine level. Under low glutamine levels, catalyzes the conversion of the PII proteins and UTP to PII-UMP and PPi, while under higher glutamine levels, GlnD hydrolyzes PII-UMP to PII and UMP (deuridylylation). Thus, controls uridylylation state and activity of the PII proteins, and plays an important role in the regulation of nitrogen assimilation and metabolism. In Vibrio parahaemolyticus serotype O3:K6 (strain RIMD 2210633), this protein is Bifunctional uridylyltransferase/uridylyl-removing enzyme.